A 283-amino-acid chain; its full sequence is uncharacterized protein (283 aa).

The N-myristoyl glycine; by host moiety is linked to residue Gly-2. N-linked (GlcNAc...) asparagine; by host glycosylation is found at Asn-31, Asn-95, Asn-105, Asn-108, Asn-137, and Asn-147. Helical transmembrane passes span 181 to 201 (IIAA…VVYF) and 250 to 270 (FIVL…LDIP). A glycan (N-linked (GlcNAc...) asparagine; by host) is linked at Asn-277.

The protein localises to the membrane. This is an uncharacterized protein from Acanthamoeba polyphaga (Amoeba).